The following is a 169-amino-acid chain: Cytochrome c oxidase subunit 4 isoform 1, mitochondrial (169 aa).

The transit peptide at 1-22 (MLATRVFSLVGKRAISTSVCVR) directs the protein to the mitochondrion. Topologically, residues 23–98 (AHESVVKSED…SFAEMNRGSN (76 aa)) are mitochondrial matrix. An N6-acetyllysine; alternate modification is found at K29. Residue K29 is modified to N6-succinyllysine; alternate. K53 is subject to N6-acetyllysine. Phosphoserine is present on residues S56 and S58. Residue K60 is modified to N6-acetyllysine; alternate. K60 bears the N6-succinyllysine; alternate mark. The residue at position 67 (K67) is an N6-acetyllysine. Residues 99-124 (EWKTVVGGAMFFIGFTALVIMWQKHY) form a helical membrane-spanning segment. Topologically, residues 125–169 (VYGPLPQSFDKEWVAKQTKRMLDMKVNPIQGLASKWDYEKNEWKK) are mitochondrial intermembrane.

This sequence belongs to the cytochrome c oxidase IV family. In terms of assembly, component of the cytochrome c oxidase (complex IV, CIV), a multisubunit enzyme composed of 14 subunits. The complex is composed of a catalytic core of 3 subunits MT-CO1, MT-CO2 and MT-CO3, encoded in the mitochondrial DNA, and 11 supernumerary subunits COX4I1 (or COX4I2), COX5A, COX5B, COX6A1 (or COX6A2), COX6B1 (or COX6B2), COX6C, COX7A2 (or COX7A1), COX7B, COX7C, COX8A and NDUFA4, which are encoded in the nuclear genome. The complex exists as a monomer or a dimer and forms supercomplexes (SCs) in the inner mitochondrial membrane with NADH-ubiquinone oxidoreductase (complex I, CI) and ubiquinol-cytochrome c oxidoreductase (cytochrome b-c1 complex, complex III, CIII), resulting in different assemblies (supercomplex SCI(1)III(2)IV(1) and megacomplex MCI(2)III(2)IV(2)). Interacts with AFG1L. Interacts with PHB2; the interaction decreases in absence of SPHK2. Interacts with ABCB7; this interaction allows the regulation of cellular iron homeostasis and cellular reactive oxygen species (ROS) levels in cardiomyocytes. Interacts with FLVCR2; this interaction occurs in the absence of heme and is disrupted upon heme binding. Interacts with IRGC. As to expression, ubiquitous.

It localises to the mitochondrion inner membrane. The protein operates within energy metabolism; oxidative phosphorylation. Its function is as follows. Component of the cytochrome c oxidase, the last enzyme in the mitochondrial electron transport chain which drives oxidative phosphorylation. The respiratory chain contains 3 multisubunit complexes succinate dehydrogenase (complex II, CII), ubiquinol-cytochrome c oxidoreductase (cytochrome b-c1 complex, complex III, CIII) and cytochrome c oxidase (complex IV, CIV), that cooperate to transfer electrons derived from NADH and succinate to molecular oxygen, creating an electrochemical gradient over the inner membrane that drives transmembrane transport and the ATP synthase. Cytochrome c oxidase is the component of the respiratory chain that catalyzes the reduction of oxygen to water. Electrons originating from reduced cytochrome c in the intermembrane space (IMS) are transferred via the dinuclear copper A center (CU(A)) of subunit 2 and heme A of subunit 1 to the active site in subunit 1, a binuclear center (BNC) formed by heme A3 and copper B (CU(B)). The BNC reduces molecular oxygen to 2 water molecules using 4 electrons from cytochrome c in the IMS and 4 protons from the mitochondrial matrix. The chain is Cytochrome c oxidase subunit 4 isoform 1, mitochondrial from Homo sapiens (Human).